We begin with the raw amino-acid sequence, 189 residues long: Pyridoxal 5'-phosphate synthase subunit PdxT (189 aa).

Gly-52 to Ser-54 lines the L-glutamine pocket. Catalysis depends on Cys-81, which acts as the Nucleophile. L-glutamine is bound by residues Arg-108 and Ile-136–Arg-137. Residues His-172 and Glu-174 each act as charge relay system in the active site.

It belongs to the glutaminase PdxT/SNO family. In terms of assembly, in the presence of PdxS, forms a dodecamer of heterodimers. Only shows activity in the heterodimer.

It catalyses the reaction aldehydo-D-ribose 5-phosphate + D-glyceraldehyde 3-phosphate + L-glutamine = pyridoxal 5'-phosphate + L-glutamate + phosphate + 3 H2O + H(+). The enzyme catalyses L-glutamine + H2O = L-glutamate + NH4(+). It functions in the pathway cofactor biosynthesis; pyridoxal 5'-phosphate biosynthesis. In terms of biological role, catalyzes the hydrolysis of glutamine to glutamate and ammonia as part of the biosynthesis of pyridoxal 5'-phosphate. The resulting ammonia molecule is channeled to the active site of PdxS. This is Pyridoxal 5'-phosphate synthase subunit PdxT from Haemophilus ducreyi (strain 35000HP / ATCC 700724).